We begin with the raw amino-acid sequence, 248 residues long: Ribosomal RNA small subunit methyltransferase J (248 aa).

S-adenosyl-L-methionine-binding positions include 101–102, 117–118, 153–154, and D171; these read RD, ER, and SS.

The protein belongs to the methyltransferase superfamily. RsmJ family.

The protein localises to the cytoplasm. The catalysed reaction is guanosine(1516) in 16S rRNA + S-adenosyl-L-methionine = N(2)-methylguanosine(1516) in 16S rRNA + S-adenosyl-L-homocysteine + H(+). Its function is as follows. Specifically methylates the guanosine in position 1516 of 16S rRNA. The sequence is that of Ribosomal RNA small subunit methyltransferase J from Pectobacterium atrosepticum (strain SCRI 1043 / ATCC BAA-672) (Erwinia carotovora subsp. atroseptica).